The following is a 406-amino-acid chain: Tyrosine--tRNA ligase (406 aa).

Tyrosine 35 is an L-tyrosine binding site. A 'HIGH' region motif is present at residues 40-49 (PTADSLHVGH). L-tyrosine is bound by residues tyrosine 168 and glutamine 172. Positions 228 to 232 (KMGKT) match the 'KMSKS' region motif. Position 231 (lysine 231) interacts with ATP. Residues 340 to 405 (STVLDVIAKV…GKKNYNKIEI (66 aa)) form the S4 RNA-binding domain.

The protein belongs to the class-I aminoacyl-tRNA synthetase family. TyrS type 1 subfamily. As to quaternary structure, homodimer.

The protein resides in the cytoplasm. The enzyme catalyses tRNA(Tyr) + L-tyrosine + ATP = L-tyrosyl-tRNA(Tyr) + AMP + diphosphate + H(+). Its function is as follows. Catalyzes the attachment of tyrosine to tRNA(Tyr) in a two-step reaction: tyrosine is first activated by ATP to form Tyr-AMP and then transferred to the acceptor end of tRNA(Tyr). The protein is Tyrosine--tRNA ligase of Clostridium botulinum (strain Eklund 17B / Type B).